The following is a 543-amino-acid chain: Excitatory amino acid transporter 1 (543 aa).

The Cytoplasmic portion of the chain corresponds to 1 to 47; the sequence is MTKSNGEEPRMGGRMERLQQGVRKRTLLAKKKVQSLTKEDVKSYLFR. Residues 48–68 form a helical membrane-spanning segment; it reads NAFVLLTVTAVIVGTILGFAL. Topologically, residues 69–86 are extracellular; it reads RPYKMSYREVKYFSFPGE. A helical transmembrane segment spans residues 87-108; sequence LLMRMLQMLVLPLIISSLVTGM. At 109–122 the chain is on the cytoplasmic side; sequence AALDSKASGKMGMR. Residues 123–145 form a helical membrane-spanning segment; the sequence is AVVYYMTTTIIAVVIGIIIVIII. Over 146–236 the chain is Extracellular; that stretch reads HPGKGTKENM…IREEMVPVPG (91 aa). Asn-206 and Asn-216 each carry an N-linked (GlcNAc...) asparagine glycan. Residues 237-260 traverse the membrane as a helical segment; sequence SVNGVNALGLVVFSMCFGFVIGNM. Over 261-269 the chain is Cytoplasmic; it reads KEQGQALRE. The chain crosses the membrane as a helical span at residues 270–297; it reads FFDSLNEAIMRLVAVIMWYAPLGILFLI. The Extracellular segment spans residues 298–318; it reads AGKIVEMEDMGVIGGQLAMYT. A helical membrane pass occupies residues 319 to 340; sequence VTVIVGLLIHAVIVLPLLYFLV. Over 341-345 the chain is Cytoplasmic; it reads TRKNP. An intramembrane region (discontinuously helical) is located at residues 346-376; the sequence is WVFIGGLLQALITALGTSSSSATLPITFKCL. Position 363-365 (363-365) interacts with L-aspartate; sequence SSS. The Cytoplasmic portion of the chain corresponds to 377–385; that stretch reads EENNGVDKR. Residues 386–412 traverse the membrane as a helical segment; it reads ITRFVLPVGATINMDGTALYEALAAIF. Positions 394, 396, and 398 each coordinate Na(+). Position 402 (Thr-402) interacts with L-aspartate. The Extracellular portion of the chain corresponds to 413–425; it reads IAQVNNFDLNFGQ. Positions 426-459 form an intramembrane region, discontinuously helical; that stretch reads IITISITATAASIGAAGIPQAGLVTMVIVLTSVG. An L-aspartate-binding site is contributed by 443 to 447; that stretch reads IPQAG. The Extracellular segment spans residues 460-472; it reads LPTDDITLIIAVD. A helical transmembrane segment spans residues 473–494; that stretch reads WFLDRLRTTTNVLGDSLGAGIV. Positions 476 and 483 each coordinate L-aspartate. Na(+) contacts are provided by Asn-483 and Asp-487. Residues 495–543 lie on the Cytoplasmic side of the membrane; the sequence is EHLSRHELKNRDVEMGNSVIEENEMKKPYQLIAQDNEPEKPVADSETKM. Ser-512 carries the phosphoserine modification. The tract at residues 522–543 is disordered; the sequence is PYQLIAQDNEPEKPVADSETKM. Positions 531-543 are enriched in basic and acidic residues; that stretch reads EPEKPVADSETKM.

This sequence belongs to the dicarboxylate/amino acid:cation symporter (DAACS) (TC 2.A.23) family. SLC1A3 subfamily. As to quaternary structure, homotrimer. Glycosylated. Detected in brain, in Bergmann glia arborising into the molecular layer of the cerebellum (at protein level). Localized in brain and is highly enriched in the Purkinje cell layer in cerebellum. Intermediate level in lung, low level in spleen, skeletal muscle and testis.

Its subcellular location is the cell membrane. It catalyses the reaction K(+)(in) + L-glutamate(out) + 3 Na(+)(out) + H(+)(out) = K(+)(out) + L-glutamate(in) + 3 Na(+)(in) + H(+)(in). The enzyme catalyses K(+)(in) + L-aspartate(out) + 3 Na(+)(out) + H(+)(out) = K(+)(out) + L-aspartate(in) + 3 Na(+)(in) + H(+)(in). It carries out the reaction D-aspartate(out) + K(+)(in) + 3 Na(+)(out) + H(+)(out) = D-aspartate(in) + K(+)(out) + 3 Na(+)(in) + H(+)(in). Sodium-dependent, high-affinity amino acid transporter that mediates the uptake of L-glutamate and also L-aspartate and D-aspartate. Functions as a symporter that transports one amino acid molecule together with two or three Na(+) ions and one proton, in parallel with the counter-transport of one K(+) ion. Plays a redundant role in the rapid removal of released glutamate from the synaptic cleft, which is essential for terminating the postsynaptic action of glutamate. The sequence is that of Excitatory amino acid transporter 1 (Slc1a3) from Mus musculus (Mouse).